Consider the following 148-residue polypeptide: Small ribosomal subunit protein uS7c (148 aa).

The protein belongs to the universal ribosomal protein uS7 family. In terms of assembly, part of the 30S ribosomal subunit.

It localises to the plastid. It is found in the chloroplast. One of the primary rRNA binding proteins, it binds directly to 16S rRNA where it nucleates assembly of the head domain of the 30S subunit. This chain is Small ribosomal subunit protein uS7c (rps7), found in Cyanidioschyzon merolae (strain NIES-3377 / 10D) (Unicellular red alga).